Consider the following 136-residue polypeptide: Probable flagellum biosynthesis repressor protein FlbT 2 (136 aa).

It belongs to the FlbT family.

In terms of biological role, has a post-transcriptional repressor function in flagellum biogenesis. Associates with the 5'-UTR of fljK mRNA and promotes its degradation. The chain is Probable flagellum biosynthesis repressor protein FlbT 2 from Bradyrhizobium diazoefficiens (strain JCM 10833 / BCRC 13528 / IAM 13628 / NBRC 14792 / USDA 110).